The following is a 508-amino-acid chain: 2,3-bisphosphoglycerate-independent phosphoglycerate mutase (508 aa).

Mn(2+) is bound by residues Asp-11 and Ser-61. Residue Ser-61 is the Phosphoserine intermediate of the active site. Residues His-122, 150-151 (RD), Arg-182, Arg-188, 257-260 (RPDR), and Lys-332 contribute to the substrate site. Positions 397, 401, 438, 439, and 456 each coordinate Mn(2+).

The protein belongs to the BPG-independent phosphoglycerate mutase family. Monomer. Requires Mn(2+) as cofactor.

It carries out the reaction (2R)-2-phosphoglycerate = (2R)-3-phosphoglycerate. It participates in carbohydrate degradation; glycolysis; pyruvate from D-glyceraldehyde 3-phosphate: step 3/5. Catalyzes the interconversion of 2-phosphoglycerate and 3-phosphoglycerate. The protein is 2,3-bisphosphoglycerate-independent phosphoglycerate mutase of Mycoplasma pneumoniae (strain ATCC 29342 / M129 / Subtype 1) (Mycoplasmoides pneumoniae).